The chain runs to 219 residues: Large ribosomal subunit protein uL4 (219 aa).

Residues 43-100 (AAKRQGTHSTKTRGEVSGGGKKPYRQKGTGRARQGSTRAPQFTGGGTVHGPQPRDYSQ) are disordered.

This sequence belongs to the universal ribosomal protein uL4 family. As to quaternary structure, part of the 50S ribosomal subunit.

Functionally, one of the primary rRNA binding proteins, this protein initially binds near the 5'-end of the 23S rRNA. It is important during the early stages of 50S assembly. It makes multiple contacts with different domains of the 23S rRNA in the assembled 50S subunit and ribosome. Forms part of the polypeptide exit tunnel. This chain is Large ribosomal subunit protein uL4, found in Mycobacterium sp. (strain JLS).